Reading from the N-terminus, the 132-residue chain is Small ribosomal subunit protein uS8 (132 aa).

It belongs to the universal ribosomal protein uS8 family. Part of the 30S ribosomal subunit. Contacts proteins S5 and S12.

Its function is as follows. One of the primary rRNA binding proteins, it binds directly to 16S rRNA central domain where it helps coordinate assembly of the platform of the 30S subunit. The chain is Small ribosomal subunit protein uS8 from Bartonella bacilliformis (strain ATCC 35685 / KC583 / Herrer 020/F12,63).